A 323-amino-acid polypeptide reads, in one-letter code: Digestive cysteine proteinase 2 (323 aa).

The N-terminal stretch at 1 to 16 (MKVAVLFLCGVALAAA) is a signal peptide. The propeptide at 17–107 (SPSWEHFKGK…FYPKKETGPQ (91 aa)) is activation peptide. Cystine bridges form between Cys128-Cys171, Cys162-Cys204, and Cys263-Cys312. Residue Cys131 is part of the active site. Catalysis depends on residues His270 and Asn290.

The protein belongs to the peptidase C1 family.

With respect to regulation, inhibited by E-64, antipain, leupeptin, heavy metal ions, iodoacetic acid, dithionitrobenzene, p-hydroxymercuri-benzoate; activated by mercaptoethanol and dithiothreitol. This Homarus americanus (American lobster) protein is Digestive cysteine proteinase 2 (LCP2).